Reading from the N-terminus, the 376-residue chain is MAKRDYYEVLGVAKNASDDEIKKAYRKLAMKYHPDRNPDSKDAEEHFKEAKEAYEMLSDSQKRAAYDQYGHAGVDPNMGAAGAQGFGGFADAFGDIFGDIFGQAAGGGRGRGGPQVYRGADLRYSMEITLEQAAHGYDTQIRVPSWASCGICHGSGAKPGTKPETCPTCHGQGTVRMSQGFFSIQQTCPKCHGTGTYIPEPCVHCHGSGKVKETKTLEVKIPAGIDDGMRIRSAGNGEPGINGGPSGDLYVEIHIKPHPVFERDGDDLHCQMPIPFTTAALGGEIEVPTLAGRASFTVAEGTQSGKTFRLRGKGIKGLRSSIAGDLYVHVQVETPVKLTDQQRDLLKQFEKSLAEGGPRHSPQSKSWFDRVKSFFE.

The J domain maps to 5 to 70; sequence DYYEVLGVAK…QKRAAYDQYG (66 aa). The CR-type zinc-finger motif lies at 136–214; the sequence is GYDTQIRVPS…CHGSGKVKET (79 aa). Residues Cys-149, Cys-152, Cys-166, Cys-169, Cys-188, Cys-191, Cys-202, and Cys-205 each coordinate Zn(2+). CXXCXGXG motif repeat units follow at residues 149-156, 166-173, 188-195, and 202-209; these read CGICHGSG, CPTCHGQG, CPKCHGTG, and CVHCHGSG.

Belongs to the DnaJ family. Homodimer. It depends on Zn(2+) as a cofactor.

The protein localises to the cytoplasm. Participates actively in the response to hyperosmotic and heat shock by preventing the aggregation of stress-denatured proteins and by disaggregating proteins, also in an autonomous, DnaK-independent fashion. Unfolded proteins bind initially to DnaJ; upon interaction with the DnaJ-bound protein, DnaK hydrolyzes its bound ATP, resulting in the formation of a stable complex. GrpE releases ADP from DnaK; ATP binding to DnaK triggers the release of the substrate protein, thus completing the reaction cycle. Several rounds of ATP-dependent interactions between DnaJ, DnaK and GrpE are required for fully efficient folding. Also involved, together with DnaK and GrpE, in the DNA replication of plasmids through activation of initiation proteins. This is Chaperone protein DnaJ from Burkholderia thailandensis (strain ATCC 700388 / DSM 13276 / CCUG 48851 / CIP 106301 / E264).